Consider the following 158-residue polypeptide: GTP-dependent dephospho-CoA kinase (158 aa).

GTP-binding residues include Asp-35, Ile-36, Val-37, Asp-54, Lys-56, Glu-109, and Asp-132.

This sequence belongs to the GTP-dependent DPCK family.

The enzyme catalyses 3'-dephospho-CoA + GTP = GDP + CoA + H(+). Its pathway is cofactor biosynthesis; coenzyme A biosynthesis. Catalyzes the GTP-dependent phosphorylation of the 3'-hydroxyl group of dephosphocoenzyme A to form coenzyme A (CoA). This Methanocaldococcus jannaschii (strain ATCC 43067 / DSM 2661 / JAL-1 / JCM 10045 / NBRC 100440) (Methanococcus jannaschii) protein is GTP-dependent dephospho-CoA kinase.